A 301-amino-acid chain; its full sequence is Mitochondrial ornithine transporter 1 (301 aa).

6 helical membrane-spanning segments follow: residues 5 to 25 (PAIQAAIDLTAGAAGGTACVL), 68 to 88 (SPALIANIAENSVLFMCYGFC), 110 to 130 (AAAGSFASAFAALVLCPTELV), 168 to 188 (GFYHGLSSTLLREVPGYFFFF), 207 to 227 (LGPIPLMLSGGFGGICLWLAV), and 237 to 257 (IQVLSMTGKQTGLIRTFLSIV). Solcar repeat units follow at residues 7–91 (IQAA…CQQV), 104–197 (LSDL…SRSF), and 207–293 (LGPI…SRKL).

It belongs to the mitochondrial carrier (TC 2.A.29) family. Expressed in the liver (at protein level).

It is found in the mitochondrion inner membrane. The protein resides in the mitochondrion membrane. The enzyme catalyses L-citrulline(in) + L-ornithine(out) + H(+)(in) = L-citrulline(out) + L-ornithine(in) + H(+)(out). It carries out the reaction L-ornithine(in) + L-arginine(out) = L-ornithine(out) + L-arginine(in). It catalyses the reaction L-ornithine(out) + L-lysine(in) = L-ornithine(in) + L-lysine(out). The catalysed reaction is L-ornithine(out) + H(+)(in) = L-ornithine(in) + H(+)(out). The enzyme catalyses L-lysine(out) + H(+)(in) = L-lysine(in) + H(+)(out). Inhibited by pyridoxal 5'-phosphate as well as by mercurials (mersalyl, p-chloromercuribenzene sulfonate, and mercuric chloride), N-ethylmaleimide and spermine. Mitochondrial ornithine-citrulline antiporter. Catalyzes the exchange between cytosolic ornithine and mitochondrial citrulline plus an H(+), the proton compensates the positive charge of ornithine thus leading to an electroneutral transport. Plays a crucial role in the urea cycle, by connecting the cytosolic and the intramitochondrial reactions of the urea cycle. Lysine and arginine are also transported by the antiport mechanism. In addition, catalyzes an electroneutral exchange of ornithine or lysine for H(+), a reaction driven by the pH gradient across the inner membrane. The chain is Mitochondrial ornithine transporter 1 (Slc25a15) from Rattus norvegicus (Rat).